Here is a 213-residue protein sequence, read N- to C-terminus: tRNA (guanine-N(7)-)-methyltransferase (213 aa).

Residues D40, E65, N92, and D118 each coordinate S-adenosyl-L-methionine. D118 is a catalytic residue. The substrate site is built by K122 and D154.

Belongs to the class I-like SAM-binding methyltransferase superfamily. TrmB family.

The enzyme catalyses guanosine(46) in tRNA + S-adenosyl-L-methionine = N(7)-methylguanosine(46) in tRNA + S-adenosyl-L-homocysteine. The protein operates within tRNA modification; N(7)-methylguanine-tRNA biosynthesis. Catalyzes the formation of N(7)-methylguanine at position 46 (m7G46) in tRNA. The protein is tRNA (guanine-N(7)-)-methyltransferase of Synechococcus elongatus (strain ATCC 33912 / PCC 7942 / FACHB-805) (Anacystis nidulans R2).